The primary structure comprises 420 residues: Probable endo-beta-1,4-glucanase celB (420 aa).

The N-terminal stretch at 1–18 (MLRKLTPLALALLPLVAG) is a signal peptide. The N-linked (GlcNAc...) asparagine glycan is linked to asparagine 118. Glutamate 215 acts as the Nucleophile in catalysis. Glutamate 220 (proton donor) is an active-site residue. 3 N-linked (GlcNAc...) asparagine glycosylation sites follow: asparagine 234, asparagine 293, and asparagine 383.

This sequence belongs to the glycosyl hydrolase 7 (cellulase C) family.

Its subcellular location is the secreted. It carries out the reaction Endohydrolysis of (1-&gt;4)-beta-D-glucosidic linkages in cellulose, lichenin and cereal beta-D-glucans.. Functionally, has endoglucanase activity on substrates containing beta-1,4 glycosidic bonds, like in carboxymethylcellulose (CMC), hydroxyethylcellulose (HEC) and beta-glucan. Involved in the degradation of complex natural cellulosic substrates. This Aspergillus terreus (strain NIH 2624 / FGSC A1156) protein is Probable endo-beta-1,4-glucanase celB (celB).